Reading from the N-terminus, the 141-residue chain is MSFIGEFKAFAMRGNVVDLAVGVIIGGAFGKIVSSMVDDLIMPIVSIFMGDKGFKDKFFVFGNQTFESLAKAKEAGVPVFAYGNFIQTVIDFTILAFVIFLMVKGMNNLKKKEEAAAPAPVPAEPTKEEQLLTEIRDLLKK.

Helical transmembrane passes span 16–36 (VVDLAVGVIIGGAFGKIVSSM) and 83–103 (GNFIQTVIDFTILAFVIFLMV).

Belongs to the MscL family. In terms of assembly, homopentamer.

Its subcellular location is the cell inner membrane. Functionally, channel that opens in response to stretch forces in the membrane lipid bilayer. May participate in the regulation of osmotic pressure changes within the cell. The polypeptide is Large-conductance mechanosensitive channel (Cytophaga hutchinsonii (strain ATCC 33406 / DSM 1761 / CIP 103989 / NBRC 15051 / NCIMB 9469 / D465)).